The sequence spans 173 residues: Crossover junction endodeoxyribonuclease RuvC (173 aa).

Residues Asp-8, Glu-67, and Asp-139 contribute to the active site. Residues Asp-8, Glu-67, and Asp-139 each contribute to the Mg(2+) site.

The protein belongs to the RuvC family. In terms of assembly, homodimer which binds Holliday junction (HJ) DNA. The HJ becomes 2-fold symmetrical on binding to RuvC with unstacked arms; it has a different conformation from HJ DNA in complex with RuvA. In the full resolvosome a probable DNA-RuvA(4)-RuvB(12)-RuvC(2) complex forms which resolves the HJ. The cofactor is Mg(2+).

Its subcellular location is the cytoplasm. It carries out the reaction Endonucleolytic cleavage at a junction such as a reciprocal single-stranded crossover between two homologous DNA duplexes (Holliday junction).. In terms of biological role, the RuvA-RuvB-RuvC complex processes Holliday junction (HJ) DNA during genetic recombination and DNA repair. Endonuclease that resolves HJ intermediates. Cleaves cruciform DNA by making single-stranded nicks across the HJ at symmetrical positions within the homologous arms, yielding a 5'-phosphate and a 3'-hydroxyl group; requires a central core of homology in the junction. The consensus cleavage sequence is 5'-(A/T)TT(C/G)-3'. Cleavage occurs on the 3'-side of the TT dinucleotide at the point of strand exchange. HJ branch migration catalyzed by RuvA-RuvB allows RuvC to scan DNA until it finds its consensus sequence, where it cleaves and resolves the cruciform DNA. The protein is Crossover junction endodeoxyribonuclease RuvC of Klebsiella pneumoniae subsp. pneumoniae (strain ATCC 700721 / MGH 78578).